Consider the following 149-residue polypeptide: Protein FAM72A (149 aa).

Belongs to the FAM72 family. Interacts with UNG. May be up-regulated in malignant colon cancers, compared to normal colon and colon adenomas. Expression is also elevated in other common cancer types, including breast, lung, uterus, and ovary.

Its subcellular location is the cytoplasm. It is found in the mitochondrion. Functionally, may play a role in the regulation of cellular reactive oxygen species metabolism. May participate in cell growth regulation. The protein is Protein FAM72A (FAM72A) of Homo sapiens (Human).